Reading from the N-terminus, the 738-residue chain is Zinc finger protein 235 (738 aa).

The KRAB domain maps to 8 to 79 (VTFKDVAVAF…ELQTQRGKHS (72 aa)). The C2H2-type 1; degenerate zinc finger occupies 263 to 285 (YQGNECEEAFNDSSSLELHKQVH). 15 C2H2-type zinc fingers span residues 319-341 (YWCH…QRVH), 347-369 (YTCH…LPIH), 375-397 (YRCD…CRVH), 403-425 (YKCE…ERIH), 431-453 (YKCG…QRVH), 459-481 (YKCD…QRVH), 487-509 (YKCE…QRVH), 515-537 (FRCN…QRVH), 543-565 (YKCE…QRVH), 571-593 (YKCE…QSVH), 599-621 (FKCD…QRVH), 627-649 (YKCD…QIIH), 655-677 (FKCE…QRVH), 683-705 (YTCQ…QRVH), and 711-733 (YICD…QRVH).

It belongs to the krueppel C2H2-type zinc-finger protein family.

Its subcellular location is the nucleus. In terms of biological role, may be involved in transcriptional regulation. The protein is Zinc finger protein 235 (ZNF235) of Homo sapiens (Human).